A 419-amino-acid polypeptide reads, in one-letter code: Delta(8)-fatty-acid desaturase (419 aa).

One can recognise a Cytochrome b5 heme-binding domain in the interval M1–S64. Residues H24 and H47 each coordinate heme. The helical transmembrane segment at L110 to L130 threads the bilayer. The short motif at H143–H147 is the Histidine box-1 element. Residues W156 to W176 traverse the membrane as a helical segment. The short motif at H180–H184 is the Histidine box-2 element. Transmembrane regions (helical) follow at residues Y226 to V246, I266 to I286, and L290 to M310. A Histidine box-3 motif is present at residues Q355 to H359.

It belongs to the fatty acid desaturase type 1 family. The cofactor is Fe cation.

It localises to the membrane. It carries out the reaction an (11Z,14Z)-icosadienoyl-containing glycerolipid + 2 Fe(II)-[cytochrome b5] + O2 + 2 H(+) = an (8Z,11Z,14Z)-icosatrienoyl-containing glycerolipid + 2 Fe(III)-[cytochrome b5] + 2 H2O. It catalyses the reaction an (11Z,14Z,17Z)-icosatrienoyl-containing glycerolipid + 2 Fe(II)-[cytochrome b5] + O2 + 2 H(+) = an (8Z,11Z,14Z,17Z)-eicosatetraenoyl-containing glycerolipid + 2 Fe(III)-[cytochrome b5] + 2 H2O. The enzyme catalyses an (11Z)-eicosenoyl-containing glycerolipid + 2 Fe(II)-[cytochrome b5] + O2 + 2 H(+) = a (8Z,11Z)-eicosadienoyl-containing glycerolipid + 2 Fe(III)-[cytochrome b5] + 2 H2O. It participates in lipid metabolism; fatty acid metabolism. In terms of biological role, delta(8)-fatty-acid desaturase which introduces a double bond at the 8-position in 20-carbon chain length fatty acids (C20) that have an existing delta-11 unsaturation (double bond). Whether it acts on CoA-linked substrates (as in animals) or phospholipid-linked substrates (as in plants and fungi) is still not clear. This Euglena gracilis protein is Delta(8)-fatty-acid desaturase (efd1).